The chain runs to 294 residues: Elongation factor Ts, mitochondrial 2 (294 aa).

It belongs to the EF-Ts family.

The protein localises to the mitochondrion. Functionally, associates with the EF-Tu.GDP complex and induces the exchange of GDP to GTP. It remains bound to the aminoacyl-tRNA.EF-Tu.GTP complex up to the GTP hydrolysis stage on the ribosome. The polypeptide is Elongation factor Ts, mitochondrial 2 (Paramecium tetraurelia).